The primary structure comprises 469 residues: Arginine biosynthesis bifunctional protein ArgJ, mitochondrial (469 aa).

The substrate site is built by threonine 199, lysine 228, threonine 239, glutamate 325, asparagine 464, and threonine 469. Threonine 239 functions as the Nucleophile in the catalytic mechanism.

The protein belongs to the ArgJ family. As to quaternary structure, heterodimer of an alpha and a beta chain. The alpha and beta chains are autoproteolytically processed from a single precursor protein within the mitochondrion.

The protein localises to the mitochondrion matrix. The catalysed reaction is N(2)-acetyl-L-ornithine + L-glutamate = N-acetyl-L-glutamate + L-ornithine. The enzyme catalyses L-glutamate + acetyl-CoA = N-acetyl-L-glutamate + CoA + H(+). It functions in the pathway amino-acid biosynthesis; L-arginine biosynthesis; L-ornithine and N-acetyl-L-glutamate from L-glutamate and N(2)-acetyl-L-ornithine (cyclic): step 1/1. Its pathway is amino-acid biosynthesis; L-arginine biosynthesis; N(2)-acetyl-L-ornithine from L-glutamate: step 1/4. Functionally, catalyzes two activities which are involved in the cyclic version of arginine biosynthesis: the synthesis of acetylglutamate from glutamate and acetyl-CoA, and of ornithine by transacetylation between acetylornithine and glutamate. The sequence is that of Arginine biosynthesis bifunctional protein ArgJ, mitochondrial from Neurospora crassa (strain ATCC 24698 / 74-OR23-1A / CBS 708.71 / DSM 1257 / FGSC 987).